A 591-amino-acid polypeptide reads, in one-letter code: Paxillin (591 aa).

Met-1 is subject to N-acetylmethionine. N-acetylserine is present on Asp-2. Positions 3–15 (DLDALLADLESTT) match the LD motif 1 motif. Residues 17 to 138 (HISKRPVFLS…PSPTVMSTSL (122 aa)) form a disordered region. Residue Tyr-31 is modified to Phosphotyrosine; by PTK6. A compositionally biased stretch (pro residues) spans 45-54 (VPPPVPPPPS). Residues 69–106 (WQPSSSRFIHQQPQSSSPVYGSSAKTSSVSNPQDSVGS) are compositionally biased toward polar residues. Phosphoserine is present on residues Ser-83 and Ser-85. Tyr-88 carries the phosphotyrosine modification. The residue at position 106 (Ser-106) is a Phosphoserine. Tyr-118 is subject to Phosphotyrosine; by PTK6. Phosphoserine is present on residues Ser-119, Ser-126, and Ser-130. Positions 121 to 137 (PNKQKSAEPSPTVMSTS) are enriched in polar residues. Thr-132 is modified (phosphothreonine). Phosphoserine occurs at positions 137, 140, and 143. The LD motif 2 signature appears at 144–156 (ELDRLLLELNAVQ). The segment at 159 to 260 (PPGFPADEAN…TQQQTRISAS (102 aa)) is disordered. Tyr-181 carries the post-translational modification Phosphotyrosine. An LD motif 3 motif is present at residues 216–228 (SVESLLDELESSV). Ser-230 is subject to Phosphoserine. Residues 236-260 (TVNQGEMSSPQRVTSTQQQTRISAS) are compositionally biased toward polar residues. Ser-244 is subject to Phosphoserine; by CDK5. At Ser-250 the chain carries Phosphoserine; by SLK. A phosphoserine mark is found at Ser-258, Ser-261, Ser-272, Ser-303, Ser-322, Ser-332, and Ser-340. The tract at residues 262-315 (ATRELDELMASLSDFKIQGLEQRADGERCWAAGWPRDGGRSSPGGQDEGGFMAQ) is required for binding to PARVA and ILK. An LD motif 4 motif is present at residues 265 to 276 (ELDELMASLSDF). A disordered region spans residues 291–335 (WAAGWPRDGGRSSPGGQDEGGFMAQGKTGSSSPPGGPPKPGSQLD). The LD motif 5 signature appears at 333-345 (QLDSMLGSLQSDL). LIM zinc-binding domains lie at 356-415 (GVCG…LFSP), 416-473 (RCYY…DMFA), 474-533 (PKCG…RRGS), and 534-591 (LCSG…KLFC). Ser-533 carries the post-translational modification Phosphoserine.

Belongs to the paxillin family. In terms of assembly, interacts in vitro with VCL/vinculin as well as to the SH3 domain of SRC and, when tyrosine phosphorylated, to the SH2 domain of CRK. Interacts with GIT1. Interacts with NUDT16L1/SDOS. Interacts with PTK2/FAK1. Interacts with PTK2B/PYK2. Interacts with ASAP2. Interacts with unphosphorylated ITGA4. Interacts with RNF5. Interacts with PDCD10. Interacts with NEK3, the interaction is prolactin-dependent. Interacts with PTK6. Interacts with TGFB1I1. Interacts with SORBS1. Interacts with PARVB. Interacts (via LD motif 4) with PARVA/PARVIN. Interacts (via LD motif 4) with ILK. Interacts (via cytoplasmic domain) with CEACAM1; the interaction is phosphotyrosyl-dependent. Interacts with LIMA1; this complex stabilizes actin dynamics. Interacts with CD36 (via C-terminus). Interacts with TRIM15. Interacts with PAK4; PAK4 acts as a scaffold to suppport PAXI phosphorylation at Ser-272. Interacts strongly with PTK2/FAK1 and weakly with VCL/vinculin. As to quaternary structure, interacts strongly with VCL/vinculin but only weakly with PTK2/FAK1. Post-translationally, phosphorylated by MAPK1/ERK2. Phosphorylated on tyrosine residues during integrin-mediated cell adhesion, embryonic development, fibroblast transformation and following stimulation of cells by mitogens. Phosphorylation at Ser-244 by CDK5 reduces its interaction with PTK2/FAK1 in matrix-cell focal adhesions (MCFA) during oligodendrocytes (OLs) differentiation. Phosphorylation at Tyr-31 and Tyr-118 by PTK6 promote the activation of RAC1 via CRK/CrKII, thereby promoting migration and invasion. Phosphorylation at Ser-250 by SLK is required for PXN redistribution and cell motility. Phosphorylation at Ser-272 promotes focal adhesion disassembly during cell migration.

It is found in the cytoplasm. Its subcellular location is the cytoskeleton. The protein resides in the cell junction. It localises to the focal adhesion. The protein localises to the cell cortex. In terms of biological role, cytoskeletal protein involved in actin-membrane attachment at sites of cell adhesion to the extracellular matrix (focal adhesion). Recruits other proteins such as TRIM15 to focal adhesion. The protein is Paxillin of Homo sapiens (Human).